The following is a 319-amino-acid chain: MKVNISIFGFGTVGRALAEIIAEKSRIFGVELNVISITDRSGTIWGDFDLLEAKEVKESTGKLSNIGDYEVYNFSPQELVEEVKPNILVDVSSWDEAHEMYKVALGEGISVVTSNKPPIANYYDELMNLAKENNAGIFFESTVMAGTPIIGVLRENLLGENIKRIDAVVNASTTFILTKMSEGKTLDDAIEEAKSLGILEEDPSKDIDGIDAYYKAKILHWVSYGEPPEEEERLGIREVRDARNVRLVAQVSKGKISVKPRKLSSDNPLLVEGVQNAAVIRTNNLGEVILKGPGGGGRVTASGVFTDIIKATLKFPNLR.

The NADPH site is built by Phe-10, Thr-12, Val-13, Arg-40, Lys-57, Ser-92, Ser-93, Ser-114, and Lys-116. NAD(+) is bound at residue Val-13. 2 residues coordinate NADP(+): Val-13 and Arg-40. Ser-92 is an NAD(+) binding site. Residue Ser-92 participates in NADP(+) binding. Residues Ser-114 and Lys-116 each coordinate NADP(+). Glu-140, Val-143, Ala-145, and Thr-147 together coordinate Na(+). Gly-197 and Glu-200 together coordinate NADP(+). L-homoserine contacts are provided by Glu-200 and Asp-211. Lys-215 functions as the Proton donor in the catalytic mechanism. Gly-296 contributes to the NADPH binding site. Gly-296 lines the NAD(+) pocket. NADP(+) is bound at residue Gly-296.

This sequence belongs to the homoserine dehydrogenase family. Homodimer. A metal cation is required as a cofactor.

It catalyses the reaction L-homoserine + NAD(+) = L-aspartate 4-semialdehyde + NADH + H(+). It functions in the pathway amino-acid biosynthesis; L-methionine biosynthesis via de novo pathway; L-homoserine from L-aspartate: step 3/3. Its pathway is amino-acid biosynthesis; L-threonine biosynthesis; L-threonine from L-aspartate: step 3/5. Functionally, catalyzes the conversion of L-aspartate-beta-semialdehyde (L-Asa) to L-homoserine (L-Hse), the third step in the biosynthesis of threonine and methionine from aspartate. Utilizes NADH but not NADPH as coenzyme. This is Homoserine dehydrogenase from Pyrococcus horikoshii (strain ATCC 700860 / DSM 12428 / JCM 9974 / NBRC 100139 / OT-3).